Reading from the N-terminus, the 372-residue chain is NAD(P)H-quinone oxidoreductase subunit 1 (372 aa).

Transmembrane regions (helical) follow at residues 27–47 (AIWM…GVLV), 65–85 (PEYI…KLVF), 97–117 (WLFT…YLIV), 128–148 (IGTG…GLLM), 166–186 (AAQS…IVMM), 204–224 (ILGW…IAAL), 266–286 (VLSA…PIPI), 308–328 (ALGI…AILL), and 347–367 (FLLP…LAFP).

The protein belongs to the complex I subunit 1 family. NDH-1 is composed of at least 11 different subunits.

It is found in the cellular thylakoid membrane. The catalysed reaction is a plastoquinone + NADH + (n+1) H(+)(in) = a plastoquinol + NAD(+) + n H(+)(out). The enzyme catalyses a plastoquinone + NADPH + (n+1) H(+)(in) = a plastoquinol + NADP(+) + n H(+)(out). Functionally, NDH-1 shuttles electrons from an unknown electron donor, via FMN and iron-sulfur (Fe-S) centers, to quinones in the respiratory and/or the photosynthetic chain. The immediate electron acceptor for the enzyme in this species is believed to be plastoquinone. Couples the redox reaction to proton translocation, and thus conserves the redox energy in a proton gradient. The sequence is that of NAD(P)H-quinone oxidoreductase subunit 1 from Trichormus variabilis (strain ATCC 29413 / PCC 7937) (Anabaena variabilis).